A 368-amino-acid chain; its full sequence is S-adenosylmethionine:tRNA ribosyltransferase-isomerase (368 aa).

It belongs to the QueA family. In terms of assembly, monomer.

Its subcellular location is the cytoplasm. The catalysed reaction is 7-aminomethyl-7-carbaguanosine(34) in tRNA + S-adenosyl-L-methionine = epoxyqueuosine(34) in tRNA + adenine + L-methionine + 2 H(+). The protein operates within tRNA modification; tRNA-queuosine biosynthesis. Functionally, transfers and isomerizes the ribose moiety from AdoMet to the 7-aminomethyl group of 7-deazaguanine (preQ1-tRNA) to give epoxyqueuosine (oQ-tRNA). The sequence is that of S-adenosylmethionine:tRNA ribosyltransferase-isomerase from Methylorubrum extorquens (strain CM4 / NCIMB 13688) (Methylobacterium extorquens).